Here is a 225-residue protein sequence, read N- to C-terminus: Claudin-8 (225 aa).

Topologically, residues 1-7 are cytoplasmic; sequence MATYALQ. A helical transmembrane segment spans residues 8–28; that stretch reads MAALVLGGVGMVGTVAVTIMP. The Extracellular segment spans residues 29–81; the sequence is QWRVSAFIESNIVVFENRWEGLWMNCMRHANIRMQCKVYDSLLALSPDLQASR. Residues 82 to 102 traverse the membrane as a helical segment; that stretch reads GLMCAASVLAFLAFMTAILGM. Residues 103–117 are Cytoplasmic-facing; that stretch reads KCTRCTGDDENVKSR. A helical membrane pass occupies residues 118-138; the sequence is ILLTAGIIFFITGLVVLIPVS. Over 139–166 the chain is Extracellular; the sequence is WVANSIIRDFYNPLVDVALKRELGEALY. Residues 167–187 form a helical membrane-spanning segment; it reads IGWTTALVLIAGGALFCCVFC. Over 188–225 the chain is Cytoplasmic; it reads CTERSNSYRYSVPSHRTTQRSFHAEKRSPSIYSKSQYV. Residue lysine 213 forms a Glycyl lysine isopeptide (Lys-Gly) (interchain with G-Cter in ubiquitin) linkage. Positions 224–225 are interactions with TJP1, TJP2 and TJP3; the sequence is YV.

Belongs to the claudin family. As to quaternary structure, can form heteropolymeric strands with other claudins. Interacts with CLDN4. Directly interacts with TJP1/ZO-1, TJP2/ZO-2 and TJP3/ZO-3. Interacts with KLHL3. In terms of processing, ubiquitinated by the BCR(KLHL3) E3 ubiquitin ligase complex in the kidney, leading to its degradation. Expressed primarily in lung and kidney. Present in both cortical and medullar collecting ducts (at protein level).

Its subcellular location is the cell junction. The protein resides in the tight junction. It is found in the cell membrane. It carries out the reaction chloride(in) = chloride(out). The enzyme catalyses bromide(in) = bromide(out). The catalysed reaction is iodide(out) = iodide(in). It catalyses the reaction fluoride(in) = fluoride(out). Its function is as follows. Can associate with other claudins to regulate tight junction structural and functional strand dynamics. May coassemble with CLDN4 into tight junction strands containing anion-selective channels that convey paracellular chloride permeability in renal collecting ducts. Cannot form tight junction strands on its own. The polypeptide is Claudin-8 (Mus musculus (Mouse)).